A 93-amino-acid polypeptide reads, in one-letter code: Small ribosomal subunit protein uS19 (93 aa).

Belongs to the universal ribosomal protein uS19 family.

Protein S19 forms a complex with S13 that binds strongly to the 16S ribosomal RNA. The sequence is that of Small ribosomal subunit protein uS19 from Mycobacterium tuberculosis (strain ATCC 25177 / H37Ra).